A 160-amino-acid polypeptide reads, in one-letter code: Transcription antitermination protein NusB (160 aa).

It belongs to the NusB family.

In terms of biological role, involved in transcription antitermination. Required for transcription of ribosomal RNA (rRNA) genes. Binds specifically to the boxA antiterminator sequence of the ribosomal RNA (rrn) operons. The sequence is that of Transcription antitermination protein NusB from Gluconobacter oxydans (strain 621H) (Gluconobacter suboxydans).